Consider the following 154-residue polypeptide: Nitrogen regulatory protein (154 aa).

One can recognise a PTS EIIA type-2 domain in the interval Gln6 to Val150. The Tele-phosphohistidine intermediate role is filled by His68.

It localises to the cytoplasm. In terms of biological role, seems to have a role in regulating nitrogen assimilation. This Pseudomonas aeruginosa (strain ATCC 15692 / DSM 22644 / CIP 104116 / JCM 14847 / LMG 12228 / 1C / PRS 101 / PAO1) protein is Nitrogen regulatory protein (ptsN).